Reading from the N-terminus, the 76-residue chain is Acyl carrier protein (76 aa).

The 76-residue stretch at 1–76 (MSIEERVKKI…SAIDYVQNNQ (76 aa)) folds into the Carrier domain. S36 is subject to O-(pantetheine 4'-phosphoryl)serine.

Belongs to the acyl carrier protein (ACP) family. Post-translationally, 4'-phosphopantetheine is transferred from CoA to a specific serine of apo-ACP by AcpS. This modification is essential for activity because fatty acids are bound in thioester linkage to the sulfhydryl of the prosthetic group.

The protein resides in the cytoplasm. It functions in the pathway lipid metabolism; fatty acid biosynthesis. In terms of biological role, carrier of the growing fatty acid chain in fatty acid biosynthesis. The chain is Acyl carrier protein from Pasteurella multocida (strain Pm70).